A 278-amino-acid polypeptide reads, in one-letter code: PILR alpha-associated neural protein (278 aa).

A signal peptide spans 1-27; it reads MWSAQLLSQLLPLWPLLLLSVLPPAQG. The tract at residues 25–93 is disordered; that stretch reads AQGSSHRSPP…PSGFEEGPPS (69 aa). At 28 to 174 the chain is on the extracellular side; it reads SSHRSPPAPA…FGGRGEGVDP (147 aa). The O-linked (GalNAc...) threonine glycan is linked to Thr136. The helical transmembrane segment at 175–195 threads the bilayer; sequence QLYVTITISIIIVLVATGIIF. Over 196–278 the chain is Cytoplasmic; that stretch reads KFCWDRSQKR…QLNRIPLVNL (83 aa). The interval 206–278 is disordered; the sequence is RRPSGQQGAL…QLNRIPLVNL (73 aa). Over residues 209–225 the composition is skewed to polar residues; the sequence is SGQQGALRQEESQQPLT.

Post-translationally, O-glycosylation at Thr-136 is essential for recognition by PILRA. In terms of tissue distribution, mainly expressed in brain and spinal cord. Weak expression also detected in heart, kidney, spleen and lymph node. Virtually no expression detected in liver and embryo relative to brain.

The protein localises to the membrane. Acts as a ligand for PILRA in neuronal tissues, where it may be involved in immune regulation. This chain is PILR alpha-associated neural protein (Pianp), found in Mus musculus (Mouse).